A 936-amino-acid chain; its full sequence is Protein translocase subunit SecA (936 aa).

ATP-binding positions include Gln-87, 105–109, and Asp-515; that span reads GEGKT. Zn(2+) is bound by residues Cys-920, Cys-922, Cys-931, and His-932.

This sequence belongs to the SecA family. As to quaternary structure, monomer and homodimer. Part of the essential Sec protein translocation apparatus which comprises SecA, SecYEG and auxiliary proteins SecDF-YajC and YidC. Requires Zn(2+) as cofactor.

The protein resides in the cell inner membrane. Its subcellular location is the cytoplasm. The catalysed reaction is ATP + H2O + cellular proteinSide 1 = ADP + phosphate + cellular proteinSide 2.. Its function is as follows. Part of the Sec protein translocase complex. Interacts with the SecYEG preprotein conducting channel. Has a central role in coupling the hydrolysis of ATP to the transfer of proteins into and across the cell membrane, serving both as a receptor for the preprotein-SecB complex and as an ATP-driven molecular motor driving the stepwise translocation of polypeptide chains across the membrane. This is Protein translocase subunit SecA from Paraburkholderia phytofirmans (strain DSM 17436 / LMG 22146 / PsJN) (Burkholderia phytofirmans).